A 197-amino-acid chain; its full sequence is Elongation factor Ts (197 aa).

Residues 81 to 84 (TDFV) form an involved in Mg(2+) ion dislocation from EF-Tu region.

The protein belongs to the EF-Ts family.

The protein resides in the cytoplasm. Associates with the EF-Tu.GDP complex and induces the exchange of GDP to GTP. It remains bound to the aminoacyl-tRNA.EF-Tu.GTP complex up to the GTP hydrolysis stage on the ribosome. This chain is Elongation factor Ts, found in Petrotoga mobilis (strain DSM 10674 / SJ95).